The chain runs to 208 residues: Troponin I, cardiac muscle (208 aa).

3 disordered regions span residues 1–37 (MAEE…KISA), 54–74 (DLER…GELC), and 168–208 (VRKD…GGQS). Position 2 is an N-acetylalanine (alanine 2). The interval 28–73 (HAKRQSKISASRKLQLKTLLLQRAKRDLEREEQERAGEKQRHLGEL) is involved in binding TNC. Basic and acidic residues-rich tracts occupy residues 54 to 71 (DLER…RHLG) and 168 to 187 (VRKD…RKNV).

Belongs to the troponin I family. As to quaternary structure, binds to actin and tropomyosin.

Troponin I is the inhibitory subunit of troponin, the thin filament regulatory complex which confers calcium-sensitivity to striated muscle actomyosin ATPase activity. The chain is Troponin I, cardiac muscle (TNNI3) from Coturnix japonica (Japanese quail).